The sequence spans 597 residues: Arginine--tRNA ligase (597 aa).

The 'HIGH' region signature appears at 125–135 (PNTNKPLHLGH).

It belongs to the class-I aminoacyl-tRNA synthetase family. Monomer.

Its subcellular location is the cytoplasm. It catalyses the reaction tRNA(Arg) + L-arginine + ATP = L-arginyl-tRNA(Arg) + AMP + diphosphate. The sequence is that of Arginine--tRNA ligase from Bacteroides fragilis (strain YCH46).